A 159-amino-acid polypeptide reads, in one-letter code: Transcription elongation factor GreA (159 aa).

Residues 47–77 adopt a coiled-coil conformation; the sequence is SENAEYDAARDKQATIENEITEIQHILDNYE.

Belongs to the GreA/GreB family.

In terms of biological role, necessary for efficient RNA polymerase transcription elongation past template-encoded arresting sites. The arresting sites in DNA have the property of trapping a certain fraction of elongating RNA polymerases that pass through, resulting in locked ternary complexes. Cleavage of the nascent transcript by cleavage factors such as GreA or GreB allows the resumption of elongation from the new 3'terminus. GreA releases sequences of 2 to 3 nucleotides. The polypeptide is Transcription elongation factor GreA (Metamycoplasma arthritidis (strain 158L3-1) (Mycoplasma arthritidis)).